The sequence spans 193 residues: Acyl carrier protein phosphodiesterase (193 aa).

This sequence belongs to the AcpH family.

The catalysed reaction is holo-[ACP] + H2O = apo-[ACP] + (R)-4'-phosphopantetheine + H(+). Its function is as follows. Converts holo-ACP to apo-ACP by hydrolytic cleavage of the phosphopantetheine prosthetic group from ACP. This Yersinia enterocolitica serotype O:8 / biotype 1B (strain NCTC 13174 / 8081) protein is Acyl carrier protein phosphodiesterase.